The following is a 624-amino-acid chain: ATP-dependent RNA helicase MRH4, mitochondrial (624 aa).

A mitochondrion-targeting transit peptide spans 1–43 (MSPVASTCLLCEMRTVVWGWQPAVPQPWHFVRFASSARLARRK). The interval 41-120 (RRKPARMALS…KDAADKKQDG (80 aa)) is disordered. Over residues 86–119 (RLPDRPIPRSDAELKRSSSDLNNKEKDAADKKQD) the composition is skewed to basic and acidic residues. The Q motif signature appears at 151 to 184 (TSFDQFPLLPQVREAVYANAFPTLTEISPTPIQR). In terms of domain architecture, Helicase ATP-binding spans 212-427 (EEELFHFDQF…EKKFPEMKRL (216 aa)). 225-232 (AETGTGKT) contributes to the ATP binding site. The DEAD box motif lies at 374-377 (DEAD). A Helicase C-terminal domain is found at 438 to 624 (RVQLGVVDVD…EAMFRGQALI (187 aa)).

Belongs to the DEAD box helicase family. MRH4 subfamily.

Its subcellular location is the mitochondrion. The enzyme catalyses ATP + H2O = ADP + phosphate + H(+). Its function is as follows. ATP-binding RNA helicase involved in mitochondrial RNA metabolism. Required for maintenance of mitochondrial DNA. In Ajellomyces capsulatus (strain NAm1 / WU24) (Darling's disease fungus), this protein is ATP-dependent RNA helicase MRH4, mitochondrial (MRH4).